We begin with the raw amino-acid sequence, 147 residues long: Probable disulfide formation protein (147 aa).

A helical transmembrane segment spans residues 9-28; the sequence is NYSLYFAWLTALIATLGSLY. An intrachain disulfide couples Cys-38 to Cys-41. 2 consecutive transmembrane segments (helical) span residues 43–62 and 69–86; these read YQRVCIYPLTILLGIAAYRT and YALPLVVLGFLFSIYQYL. Cys-99 and Cys-106 are joined by a disulfide. The helical transmembrane segment at 115–138 threads the bilayer; sequence GFITLPFLGMLATLIMSFFLIMAF.

The protein belongs to the DsbB family. BdbC subfamily.

Its subcellular location is the cell inner membrane. Its function is as follows. Required for disulfide bond formation in some proteins. The protein is Probable disulfide formation protein of Coxiella burnetii (strain CbuK_Q154) (Coxiella burnetii (strain Q154)).